The following is a 423-amino-acid chain: Replication factor C large subunit (423 aa).

ATP is bound at residue 63–70 (GPPGIGKT).

This sequence belongs to the activator 1 small subunits family. RfcL subfamily. In terms of assembly, heteromultimer composed of small subunits (RfcS) and large subunits (RfcL).

In terms of biological role, part of the RFC clamp loader complex which loads the PCNA sliding clamp onto DNA. This Pyrobaculum islandicum (strain DSM 4184 / JCM 9189 / GEO3) protein is Replication factor C large subunit.